The sequence spans 619 residues: Hypermethylated in cancer 2 protein (619 aa).

The 64-residue stretch at 46–109 (CDVIIMVENS…IYTGKLLPSD (64 aa)) folds into the BTB domain. A phosphoserine mark is found at S166, S169, and S197. Disordered regions lie at residues 180–293 (DVRK…VGNS) and 307–426 (MDVE…GHTG). Over residues 214–228 (LGLGGPAGGEMGLGG) the composition is skewed to gly residues. Positions 247 to 249 (DLS) are binding to CtBP. Positions 281-293 (APTSTSALPVGNS) are enriched in polar residues. Basic and acidic residues predominate over residues 337 to 357 (KKDWNKKEPVAGSPFDRRETG). Residues S349 and S416 each carry the phosphoserine modification. 5 consecutive C2H2-type zinc fingers follow at residues 446–468 (YVCI…VETH), 509–531 (FKCS…EKTH), 537–559 (FPCN…MRSH), 565–587 (FACD…MRVH), and 593–615 (YECQ…LRMH).

Belongs to the krueppel C2H2-type zinc-finger protein family. Hic subfamily. Self-associates. Interacts with HIC1.

It localises to the nucleus. Its function is as follows. Transcriptional repressor. This is Hypermethylated in cancer 2 protein (Hic2) from Mus musculus (Mouse).